Here is a 319-residue protein sequence, read N- to C-terminus: Cobalamin biosynthesis protein CbiB (319 aa).

5 consecutive transmembrane segments (helical) span residues 52–74, 79–101, 155–177, 207–229, and 296–318; these read IGGG…GVLA, IHPW…GRSL, GIIA…YKAV, YLPA…LSGW, and LMWV…LSGV.

It belongs to the CobD/CbiB family.

Its subcellular location is the cell membrane. Its pathway is cofactor biosynthesis; adenosylcobalamin biosynthesis; adenosylcobalamin from cob(II)yrinate a,c-diamide: step 4/7. Converts cobyric acid to cobinamide by the addition of aminopropanol on the F carboxylic group. However, the true cosubstrate could be (R)-1-amino-2-propanol O-2-phosphate, leading to cobinamide phosphate. This Salmonella typhi protein is Cobalamin biosynthesis protein CbiB.